A 410-amino-acid chain; its full sequence is Arginine deiminase (410 aa).

Cysteine 400 acts as the Amidino-cysteine intermediate in catalysis.

Belongs to the arginine deiminase family.

Its subcellular location is the cytoplasm. It catalyses the reaction L-arginine + H2O = L-citrulline + NH4(+). It participates in amino-acid degradation; L-arginine degradation via ADI pathway; carbamoyl phosphate from L-arginine: step 1/2. This Streptococcus agalactiae serotype Ia (strain ATCC 27591 / A909 / CDC SS700) protein is Arginine deiminase.